The following is a 129-amino-acid chain: MARQIRKTHAKQKKNIINGITHIKSTFNNTLITITDLKGSTLSWSSAGASGFKGTKKGTPFAAQIAAEKAAKQAIEQGIRQTEVLVNGPGAGRETAIRALQATGINITLIKDITPIPHNGCRPPKKRRV.

The protein belongs to the universal ribosomal protein uS11 family. As to quaternary structure, part of the 30S ribosomal subunit.

The protein localises to the plastid. Its subcellular location is the chloroplast. This Gracilaria tenuistipitata var. liui (Red alga) protein is Small ribosomal subunit protein uS11c.